A 275-amino-acid chain; its full sequence is Release factor glutamine methyltransferase (275 aa).

S-adenosyl-L-methionine is bound by residues 114-118, Asp-137, Trp-165, and Asn-180; that span reads GTGSG. Position 180–183 (180–183) interacts with substrate; the sequence is NPPY.

Belongs to the protein N5-glutamine methyltransferase family. PrmC subfamily.

It carries out the reaction L-glutaminyl-[peptide chain release factor] + S-adenosyl-L-methionine = N(5)-methyl-L-glutaminyl-[peptide chain release factor] + S-adenosyl-L-homocysteine + H(+). In terms of biological role, methylates the class 1 translation termination release factors RF1/PrfA and RF2/PrfB on the glutamine residue of the universally conserved GGQ motif. In Xylella fastidiosa (strain 9a5c), this protein is Release factor glutamine methyltransferase.